The sequence spans 142 residues: MAKKIAGQLKLQVSAGSATPSPPIGPALGQRGINIMEFCKAFNAQTQEMEKGSPVPVVITYYQDKSFTFVMKTPPVSYFLKKAANLKSGSKEPGKVKAGTVSRDKVREIATAKMKDLNANDVEAAMRMVEGSARSMGLEVVG.

It belongs to the universal ribosomal protein uL11 family. Part of the ribosomal stalk of the 50S ribosomal subunit. Interacts with L10 and the large rRNA to form the base of the stalk. L10 forms an elongated spine to which L12 dimers bind in a sequential fashion forming a multimeric L10(L12)X complex. Post-translationally, one or more lysine residues are methylated.

Forms part of the ribosomal stalk which helps the ribosome interact with GTP-bound translation factors. The protein is Large ribosomal subunit protein uL11 of Mesorhizobium japonicum (strain LMG 29417 / CECT 9101 / MAFF 303099) (Mesorhizobium loti (strain MAFF 303099)).